Here is a 513-residue protein sequence, read N- to C-terminus: ATP synthase subunit alpha (513 aa).

170–177 (GDRQTGKT) lines the ATP pocket.

Belongs to the ATPase alpha/beta chains family. As to quaternary structure, F-type ATPases have 2 components, CF(1) - the catalytic core - and CF(0) - the membrane proton channel. CF(1) has five subunits: alpha(3), beta(3), gamma(1), delta(1), epsilon(1). CF(0) has three main subunits: a(1), b(2) and c(9-12). The alpha and beta chains form an alternating ring which encloses part of the gamma chain. CF(1) is attached to CF(0) by a central stalk formed by the gamma and epsilon chains, while a peripheral stalk is formed by the delta and b chains.

It localises to the cell inner membrane. It carries out the reaction ATP + H2O + 4 H(+)(in) = ADP + phosphate + 5 H(+)(out). Its function is as follows. Produces ATP from ADP in the presence of a proton gradient across the membrane. The alpha chain is a regulatory subunit. The polypeptide is ATP synthase subunit alpha (Teredinibacter turnerae (strain ATCC 39867 / T7901)).